The primary structure comprises 226 residues: Late protein I226R (226 aa).

A signal peptide spans 1 to 16 (MKMETFLVCLFHNADG). Residues Asn142 and Asn164 are each glycosylated (N-linked (GlcNAc...) asparagine; by host).

The protein belongs to the asfivirus I226R family.

Plays a role in the inhibition of host NF-kappa-B and IRF3 signaling pathways. Mechanistically, promotes the degradation of host IKBKG through enhancing its ubiquitination leading to inhibition of both pathways. In African swine fever virus (isolate Tick/South Africa/Pretoriuskop Pr4/1996) (ASFV), this protein is Late protein I226R.